Here is a 574-residue protein sequence, read N- to C-terminus: Iron hydrogenase 1 (574 aa).

One can recognise a 2Fe-2S ferredoxin-type domain in the interval 1–78 (MKTIIINGVQ…GMIINTNSDA (78 aa)). Cys-34, Cys-46, Cys-49, and Cys-62 together coordinate [2Fe-2S] cluster. Residues 78–117 (AVNEKIKSRISQLLDIHEFKCGPCNRRENCEFLKLVIKYK) form the 4Fe-4S His(Cys)3-ligated-type domain. His-94, Cys-98, Cys-101, Cys-107, Cys-147, Cys-150, Cys-153, Cys-157, Cys-190, Cys-193, Cys-196, Cys-200, Cys-300, Cys-355, Cys-499, and Cys-503 together coordinate [4Fe-4S] cluster. 4Fe-4S ferredoxin-type domains follow at residues 138 to 167 (KSLT…YAMK) and 181 to 210 (DEKC…EKSH). Cys-503 lines the Fe(2+) pocket.

Monomer. Requires [2Fe-2S] cluster as cofactor. [4Fe-4S] cluster is required as a cofactor. The cofactor is Fe(2+).

The catalysed reaction is H2 + 2 oxidized [2Fe-2S]-[ferredoxin] = 2 reduced [2Fe-2S]-[ferredoxin] + 2 H(+). This chain is Iron hydrogenase 1, found in Clostridium pasteurianum.